The chain runs to 353 residues: Protein-glutamate methylesterase/protein-glutamine glutaminase (353 aa).

One can recognise a Response regulatory domain in the interval 6–123 (RVLVIDDSAL…ARGLKAMLSE (118 aa)). Position 57 is a 4-aspartylphosphate (Asp57). Residues 159–351 (AESTDKVIAI…PRIVDLLSER (193 aa)) enclose the CheB-type methylesterase domain. Active-site residues include Ser171, His197, and Asp293.

Belongs to the CheB family. Post-translationally, phosphorylated by CheA. Phosphorylation of the N-terminal regulatory domain activates the methylesterase activity.

It localises to the cytoplasm. The catalysed reaction is [protein]-L-glutamate 5-O-methyl ester + H2O = L-glutamyl-[protein] + methanol + H(+). It carries out the reaction L-glutaminyl-[protein] + H2O = L-glutamyl-[protein] + NH4(+). Functionally, involved in chemotaxis. Part of a chemotaxis signal transduction system that modulates chemotaxis in response to various stimuli. Catalyzes the demethylation of specific methylglutamate residues introduced into the chemoreceptors (methyl-accepting chemotaxis proteins or MCP) by CheR. Also mediates the irreversible deamidation of specific glutamine residues to glutamic acid. The protein is Protein-glutamate methylesterase/protein-glutamine glutaminase of Syntrophotalea carbinolica (strain DSM 2380 / NBRC 103641 / GraBd1) (Pelobacter carbinolicus).